The following is a 356-amino-acid chain: tRNA pseudouridine synthase D (356 aa).

D84 (nucleophile) is an active-site residue. The TRUD domain maps to 159 to 302 (GVPNYYGPQR…RRGARRPIRV (144 aa)).

Belongs to the pseudouridine synthase TruD family.

The catalysed reaction is uridine(13) in tRNA = pseudouridine(13) in tRNA. Its function is as follows. Responsible for synthesis of pseudouridine from uracil-13 in transfer RNAs. This is tRNA pseudouridine synthase D from Thermus thermophilus (strain ATCC 27634 / DSM 579 / HB8).